A 511-amino-acid polypeptide reads, in one-letter code: 2,3-bisphosphoglycerate-independent phosphoglycerate mutase (511 aa).

Mn(2+) is bound at residue D12. Y36 carries the post-translational modification Phosphotyrosine. Residue S62 coordinates Mn(2+). S62 functions as the Phosphoserine intermediate in the catalytic mechanism. Residues H123, 153-154 (RD), R185, R191, 261-264 (RPDR), and K336 each bind substrate. Mn(2+)-binding residues include D403, H407, D444, H445, and H462.

It belongs to the BPG-independent phosphoglycerate mutase family. As to quaternary structure, monomer. Requires Mn(2+) as cofactor.

The enzyme catalyses (2R)-2-phosphoglycerate = (2R)-3-phosphoglycerate. It functions in the pathway carbohydrate degradation; glycolysis; pyruvate from D-glyceraldehyde 3-phosphate: step 3/5. In terms of biological role, catalyzes the interconversion of 2-phosphoglycerate and 3-phosphoglycerate. This is 2,3-bisphosphoglycerate-independent phosphoglycerate mutase from Geobacillus kaustophilus (strain HTA426).